The chain runs to 172 residues: Ribosome maturation factor RimM (172 aa).

One can recognise a PRC barrel domain in the interval 96–168 (DGEFYYHEII…RIDVTVLEGL (73 aa)).

Belongs to the RimM family. As to quaternary structure, binds ribosomal protein uS19.

It localises to the cytoplasm. Its function is as follows. An accessory protein needed during the final step in the assembly of 30S ribosomal subunit, possibly for assembly of the head region. Essential for efficient processing of 16S rRNA. May be needed both before and after RbfA during the maturation of 16S rRNA. It has affinity for free ribosomal 30S subunits but not for 70S ribosomes. This chain is Ribosome maturation factor RimM, found in Streptococcus mutans serotype c (strain ATCC 700610 / UA159).